We begin with the raw amino-acid sequence, 100 residues long: ATP-dependent Clp protease adapter protein ClpS (100 aa).

The protein belongs to the ClpS family. In terms of assembly, binds to the N-terminal domain of the chaperone ClpA.

Its function is as follows. Involved in the modulation of the specificity of the ClpAP-mediated ATP-dependent protein degradation. This Corynebacterium glutamicum (strain R) protein is ATP-dependent Clp protease adapter protein ClpS.